We begin with the raw amino-acid sequence, 95 residues long: MGSGVRVRVIVKGIVQGVGFRSFIRRHATALGLTGYVRNLPDGESVEIVVSGPEDRVNELIKLAKRGPPAAVVDSVEVEPYEGVEDFTGFSVRYD.

Residues 6–94 (RVRVIVKGIV…EDFTGFSVRY (89 aa)) form the Acylphosphatase-like domain. Residues Arg21 and Asn39 contribute to the active site.

The protein belongs to the acylphosphatase family.

The catalysed reaction is an acyl phosphate + H2O = a carboxylate + phosphate + H(+). The polypeptide is Acylphosphatase (acyP) (Caldivirga maquilingensis (strain ATCC 700844 / DSM 13496 / JCM 10307 / IC-167)).